The chain runs to 67 residues: Large ribosomal subunit protein uL29 (67 aa).

Belongs to the universal ribosomal protein uL29 family.

The chain is Large ribosomal subunit protein uL29 from Gemmatimonas aurantiaca (strain DSM 14586 / JCM 11422 / NBRC 100505 / T-27).